Consider the following 415-residue polypeptide: Extracellular signal-regulated kinase 1 (415 aa).

A Protein kinase domain is found at 66 to 369 (YQILEIVGEG…VEDALKHPYL (304 aa)). ATP is bound by residues 72 to 80 (VGEGAYGIV) and Lys95. Residue Asp190 is the Proton acceptor of the active site. Thr226 carries the phosphothreonine modification. The short motif at 226-228 (TEY) is the TXY element. The residue at position 228 (Tyr228) is a Phosphotyrosine.

The protein belongs to the protein kinase superfamily. CMGC Ser/Thr protein kinase family. MAP kinase subfamily. Mg(2+) is required as a cofactor. Post-translationally, dually phosphorylated on Thr-226 and Tyr-228, which activates the enzyme.

The catalysed reaction is L-seryl-[protein] + ATP = O-phospho-L-seryl-[protein] + ADP + H(+). It carries out the reaction L-threonyl-[protein] + ATP = O-phospho-L-threonyl-[protein] + ADP + H(+). With respect to regulation, activated by tyrosine and threonine phosphorylation. This Candida albicans (strain WO-1) (Yeast) protein is Extracellular signal-regulated kinase 1 (CEK1).